The primary structure comprises 435 residues: Zinc finger CCCH domain-containing protein 67 (435 aa).

The segment at 1 to 91 is disordered; that stretch reads MSKPEETSDP…DQKEEEEGSE (91 aa). 3 C3H1-type zinc fingers span residues 101–129, 148–176, and 194–222; these read RPDS…HPVR, NPKL…HMKE, and RPGE…HPDP. Residues 235 to 274 form a disordered region; that stretch reads GNNGGSFSPKAPSQASSTSWSSTRHMNGTGTAPFIPSMFP. The span at 247-256 shows a compositional bias: low complexity; it reads SQASSTSWSS. C3H1-type zinc fingers lie at residues 334–362 and 380–408; these read RPDQ…HPKN and RPDQ…HSIP. A disordered region spans residues 412 to 435; that stretch reads SPSSSQTVEARQVGANGNEDDSWH.

It localises to the nucleus. In Arabidopsis thaliana (Mouse-ear cress), this protein is Zinc finger CCCH domain-containing protein 67.